Reading from the N-terminus, the 202-residue chain is MTSSRSTELIETQEDVVRKLSQKTPVSNFSALPLPNGPQAPTQLQPFQFEFPLPAGQEGSVTLPLATFPKMATFLSRHRRAQLTQLHAVVSPSAVSIGHPLTVQLIWVPASSTTTSSQILGTYGGQQISVGGQVTNSSPAKVSANLLMMNPHIKDSTSYTDTPKLLVYSTPAVPDDKLTTSSASIIVFGEVLLSSPQLNPSA.

Belongs to the tymoviruses capsid protein family.

The protein resides in the virion. Its function is as follows. Self-assembles to form a T=3 icosahedral capsid composed of 180 copies of the capsid protein. The capsid encapsulates the single-stranded RNA genome. The chain is Capsid protein from Erysimum (ELV).